Consider the following 351-residue polypeptide: GDSL esterase/lipase At3g53100 (351 aa).

The first 24 residues, 1–24 (MQKMRVSGFRVLLLVSCFFCKSKG), serve as a signal peptide directing secretion. Ser-36 acts as the Nucleophile in catalysis. Residues Asn-234, Asn-254, and Asn-318 are each glycosylated (N-linked (GlcNAc...) asparagine). Catalysis depends on residues Asp-326 and His-329.

It belongs to the 'GDSL' lipolytic enzyme family.

Its subcellular location is the secreted. This is GDSL esterase/lipase At3g53100 from Arabidopsis thaliana (Mouse-ear cress).